The sequence spans 199 residues: FMN-dependent NADH:quinone oxidoreductase 2 (199 aa).

FMN contacts are provided by residues Ser-10, 16-18 (SVS), and 96-99 (MYNF).

It belongs to the azoreductase type 1 family. In terms of assembly, homodimer. It depends on FMN as a cofactor.

The catalysed reaction is 2 a quinone + NADH + H(+) = 2 a 1,4-benzosemiquinone + NAD(+). It catalyses the reaction N,N-dimethyl-1,4-phenylenediamine + anthranilate + 2 NAD(+) = 2-(4-dimethylaminophenyl)diazenylbenzoate + 2 NADH + 2 H(+). Functionally, quinone reductase that provides resistance to thiol-specific stress caused by electrophilic quinones. Also exhibits azoreductase activity. Catalyzes the reductive cleavage of the azo bond in aromatic azo compounds to the corresponding amines. The polypeptide is FMN-dependent NADH:quinone oxidoreductase 2 (Pseudomonas putida (strain ATCC 47054 / DSM 6125 / CFBP 8728 / NCIMB 11950 / KT2440)).